Reading from the N-terminus, the 334-residue chain is Porphobilinogen deaminase (334 aa).

Position 250 is an S-(dipyrrolylmethanemethyl)cysteine (Cys250).

It belongs to the HMBS family. Monomer. Dipyrromethane serves as cofactor.

The enzyme catalyses 4 porphobilinogen + H2O = hydroxymethylbilane + 4 NH4(+). Its pathway is porphyrin-containing compound metabolism; protoporphyrin-IX biosynthesis; coproporphyrinogen-III from 5-aminolevulinate: step 2/4. Its function is as follows. Tetrapolymerization of the monopyrrole PBG into the hydroxymethylbilane pre-uroporphyrinogen in several discrete steps. The chain is Porphobilinogen deaminase from Cutibacterium acnes (strain DSM 16379 / KPA171202) (Propionibacterium acnes).